Consider the following 321-residue polypeptide: MPDHGMSRLLVAAFYAFTPLDDDQREALLSALPTQASHGAVLGSVLVAKEGVNGTISGPEQGVEGLLEHLQEQLKLGEQHFERLEVKRSWAERSVFRRFKARRKKEIVTMGVTGVDPRANVGTYVDPEDWNGLVDDPDTLVIDTRNHYETAIGSFDGAIDPGTDSFRDFPHWAETKLRPLIDETAPKRIAMFCTGGIRCEKASSYLQHQGFGEVHHLRGGILKYLEQVPEEESRWRGECFVFDQRVALNHQLEPGEHSLCHACGLPLSPEQRSLPSYIKGVQCLHCIDRFSESDRQRFAMRQRQMDQLSSASSKKSDDFSL.

Positions 135–233 constitute a Rhodanese domain; that stretch reads DDPDTLVIDT…YLEQVPEEES (99 aa). C193 acts as the Cysteine persulfide intermediate in catalysis. Positions 301-321 are disordered; that stretch reads RQRQMDQLSSASSKKSDDFSL.

This sequence belongs to the TrhO family.

It carries out the reaction uridine(34) in tRNA + AH2 + O2 = 5-hydroxyuridine(34) in tRNA + A + H2O. Functionally, catalyzes oxygen-dependent 5-hydroxyuridine (ho5U) modification at position 34 in tRNAs. The polypeptide is tRNA uridine(34) hydroxylase (Parasynechococcus marenigrum (strain WH8102)).